Here is a 240-residue protein sequence, read N- to C-terminus: UDP-2,3-diacylglucosamine hydrolase (240 aa).

The Mn(2+) site is built by Asp-9, His-11, Asp-43, Asn-81, and His-116. A substrate-binding site is contributed by 81-82 (NR). The substrate site is built by Asp-124, Ser-162, Lys-166, Lys-169, and His-197. Mn(2+) contacts are provided by His-197 and His-199.

The protein belongs to the LpxH family. Mn(2+) serves as cofactor.

It is found in the cell inner membrane. It carries out the reaction UDP-2-N,3-O-bis[(3R)-3-hydroxytetradecanoyl]-alpha-D-glucosamine + H2O = 2-N,3-O-bis[(3R)-3-hydroxytetradecanoyl]-alpha-D-glucosaminyl 1-phosphate + UMP + 2 H(+). It participates in glycolipid biosynthesis; lipid IV(A) biosynthesis; lipid IV(A) from (3R)-3-hydroxytetradecanoyl-[acyl-carrier-protein] and UDP-N-acetyl-alpha-D-glucosamine: step 4/6. Functionally, hydrolyzes the pyrophosphate bond of UDP-2,3-diacylglucosamine to yield 2,3-diacylglucosamine 1-phosphate (lipid X) and UMP by catalyzing the attack of water at the alpha-P atom. Involved in the biosynthesis of lipid A, a phosphorylated glycolipid that anchors the lipopolysaccharide to the outer membrane of the cell. The protein is UDP-2,3-diacylglucosamine hydrolase of Neisseria meningitidis serogroup B (strain ATCC BAA-335 / MC58).